The primary structure comprises 295 residues: 4-hydroxy-tetrahydrodipicolinate synthase (295 aa).

T47 provides a ligand contact to pyruvate. Y135 serves as the catalytic Proton donor/acceptor. Catalysis depends on K163, which acts as the Schiff-base intermediate with substrate. Position 206 (I206) interacts with pyruvate.

The protein belongs to the DapA family. As to quaternary structure, homodimer.

It is found in the cytoplasm. It carries out the reaction L-aspartate 4-semialdehyde + pyruvate = (2S,4S)-4-hydroxy-2,3,4,5-tetrahydrodipicolinate + H2O + H(+). It participates in amino-acid biosynthesis; L-lysine biosynthesis via DAP pathway; (S)-tetrahydrodipicolinate from L-aspartate: step 3/4. Its function is as follows. Catalyzes the condensation of (S)-aspartate-beta-semialdehyde [(S)-ASA] and pyruvate to 4-hydroxy-tetrahydrodipicolinate (HTPA). This chain is 4-hydroxy-tetrahydrodipicolinate synthase, found in Staphylococcus saprophyticus subsp. saprophyticus (strain ATCC 15305 / DSM 20229 / NCIMB 8711 / NCTC 7292 / S-41).